The chain runs to 232 residues: Ribonuclease P protein component 3 (232 aa).

Belongs to the eukaryotic/archaeal RNase P protein component 3 family. Consists of a catalytic RNA component and at least 4-5 protein subunits. Forms a subcomplex with Rnp2 which stimulates the catalytic RNA.

It localises to the cytoplasm. It catalyses the reaction Endonucleolytic cleavage of RNA, removing 5'-extranucleotides from tRNA precursor.. Functionally, part of ribonuclease P, a protein complex that generates mature tRNA molecules by cleaving their 5'-ends. The chain is Ribonuclease P protein component 3 from Methanocaldococcus jannaschii (strain ATCC 43067 / DSM 2661 / JAL-1 / JCM 10045 / NBRC 100440) (Methanococcus jannaschii).